Reading from the N-terminus, the 65-residue chain is Sarcoplasmic/endoplasmic reticulum calcium ATPase regulator ARLN (65 aa).

Met1 carries the post-translational modification N-acetylmethionine. The segment at 1–36 (MEVSQAASGTDGVRERRGSFEAGRRNQDEAPQSGMN) is disordered. Residues 12–28 (GVRERRGSFEAGRRNQD) are compositionally biased toward basic and acidic residues. The residue at position 19 (Ser19) is a Phosphoserine. The helical transmembrane segment at 44–64 (WLDLWLFILFDLALFVFVYLL) threads the bilayer.

As to quaternary structure, homooligomer. Can also form heterooligomers with other sarcoplasmic/endoplasmic reticulum calcium ATPase (SERCA) regulators ERLN, PLN, SLN and STRIT1/DWORF. Monomer. Interacts as a monomer with ATP2A2/SERCA2; the interaction results in inhibition of ATP2A2 Ca(2+) affinity. As to expression, in the embryo, expressed in heart, epidermal epithelium, salivary gland, brown fat, intestinal epithelium and bladder urothelium.

Its subcellular location is the endoplasmic reticulum membrane. Functionally, inhibits the activity of the calcium ATPases ATP2A2/SERCA2 and ATP2A3/SERCA3 by decreasing their apparent affinity for Ca(2+). The protein is Sarcoplasmic/endoplasmic reticulum calcium ATPase regulator ARLN (Arln) of Mus musculus (Mouse).